Reading from the N-terminus, the 335-residue chain is Glycerol-3-phosphate dehydrogenase [NAD(P)+] (335 aa).

NADPH-binding residues include serine 12, tryptophan 13, arginine 33, arginine 34, and lysine 107. The sn-glycerol 3-phosphate site is built by lysine 107, glycine 134, and serine 136. Alanine 138 contacts NADPH. The sn-glycerol 3-phosphate site is built by lysine 189, aspartate 242, serine 252, arginine 253, and asparagine 254. Lysine 189 serves as the catalytic Proton acceptor. Arginine 253 lines the NADPH pocket. NADPH-binding residues include valine 277 and glutamate 279.

Belongs to the NAD-dependent glycerol-3-phosphate dehydrogenase family.

It is found in the cytoplasm. The catalysed reaction is sn-glycerol 3-phosphate + NAD(+) = dihydroxyacetone phosphate + NADH + H(+). It carries out the reaction sn-glycerol 3-phosphate + NADP(+) = dihydroxyacetone phosphate + NADPH + H(+). The protein operates within membrane lipid metabolism; glycerophospholipid metabolism. Functionally, catalyzes the reduction of the glycolytic intermediate dihydroxyacetone phosphate (DHAP) to sn-glycerol 3-phosphate (G3P), the key precursor for phospholipid synthesis. The protein is Glycerol-3-phosphate dehydrogenase [NAD(P)+] of Moorella thermoacetica (strain ATCC 39073 / JCM 9320).